The following is an 87-amino-acid chain: uncharacterized protein (87 aa).

Positions 1-23 (MAVSVLRLTVVLGLLVLFLTCYA) are cleaved as a signal peptide. A disordered region spans residues 24–44 (DDKPDKPDDKPDDSGKDPKPD).

Its subcellular location is the secreted. This is an uncharacterized protein from Homo sapiens (Human).